The following is an 82-amino-acid chain: ATP synthase subunit c, chloroplastic (82 aa).

Transmembrane regions (helical) follow at residues 4-24 (IISAASVIAAGLAIGLAAIGP) and 57-77 (LAFMEALTIYGLVVALALLFA).

This sequence belongs to the ATPase C chain family. In terms of assembly, F-type ATPases have 2 components, F(1) - the catalytic core - and F(0) - the membrane proton channel. F(1) has five subunits: alpha(3), beta(3), gamma(1), delta(1), epsilon(1). F(0) has four main subunits: a(1), b(1), b'(1) and c(10-14). The alpha and beta chains form an alternating ring which encloses part of the gamma chain. F(1) is attached to F(0) by a central stalk formed by the gamma and epsilon chains, while a peripheral stalk is formed by the delta, b and b' chains.

It is found in the plastid. The protein resides in the chloroplast thylakoid membrane. Functionally, f(1)F(0) ATP synthase produces ATP from ADP in the presence of a proton or sodium gradient. F-type ATPases consist of two structural domains, F(1) containing the extramembraneous catalytic core and F(0) containing the membrane proton channel, linked together by a central stalk and a peripheral stalk. During catalysis, ATP synthesis in the catalytic domain of F(1) is coupled via a rotary mechanism of the central stalk subunits to proton translocation. In terms of biological role, key component of the F(0) channel; it plays a direct role in translocation across the membrane. A homomeric c-ring of between 10-14 subunits forms the central stalk rotor element with the F(1) delta and epsilon subunits. The polypeptide is ATP synthase subunit c, chloroplastic (Trieres chinensis (Marine centric diatom)).